A 227-amino-acid chain; its full sequence is Izumo sperm-egg fusion protein 4 (227 aa).

Residues 1 to 24 form the signal peptide; that stretch reads MFGQGRLGQAMALLLFLGMTAALA. Asparagine 153 and asparagine 214 each carry an N-linked (GlcNAc...) asparagine glycan.

This sequence belongs to the Izumo family.

The protein resides in the secreted. In Mus musculus (Mouse), this protein is Izumo sperm-egg fusion protein 4 (Izumo4).